The following is a 250-amino-acid chain: Phosphoribosylaminoimidazole-succinocarboxamide synthase (250 aa).

Belongs to the SAICAR synthetase family.

The catalysed reaction is 5-amino-1-(5-phospho-D-ribosyl)imidazole-4-carboxylate + L-aspartate + ATP = (2S)-2-[5-amino-1-(5-phospho-beta-D-ribosyl)imidazole-4-carboxamido]succinate + ADP + phosphate + 2 H(+). It participates in purine metabolism; IMP biosynthesis via de novo pathway; 5-amino-1-(5-phospho-D-ribosyl)imidazole-4-carboxamide from 5-amino-1-(5-phospho-D-ribosyl)imidazole-4-carboxylate: step 1/2. This chain is Phosphoribosylaminoimidazole-succinocarboxamide synthase, found in Synechococcus sp. (strain WH7803).